The sequence spans 347 residues: GMP reductase (347 aa).

108 to 131 (ADFDKMKQILALSPSLKFICIDVA) is an NADP(+) binding site. Residues Gly-181 and Gly-183 each contribute to the K(+) site. Catalysis depends on Cys-186, which acts as the Thioimidate intermediate. An NADP(+)-binding site is contributed by 216–239 (IVSDGGCSVPGDVAKAFGGGADFV).

Belongs to the IMPDH/GMPR family. GuaC type 1 subfamily. Homotetramer.

It carries out the reaction IMP + NH4(+) + NADP(+) = GMP + NADPH + 2 H(+). In terms of biological role, catalyzes the irreversible NADPH-dependent deamination of GMP to IMP. It functions in the conversion of nucleobase, nucleoside and nucleotide derivatives of G to A nucleotides, and in maintaining the intracellular balance of A and G nucleotides. The chain is GMP reductase from Yersinia pestis bv. Antiqua (strain Antiqua).